The sequence spans 2207 residues: Kinetochore-associated protein 1 (2207 aa).

Threonine 13 is subject to Phosphothreonine. Serine 15 carries the phosphoserine modification. The segment at 1024-1045 (EAAQAEHKHRGPPGPTPARGTH) is disordered.

As to quaternary structure, interacts with ZW10. This interaction is required for stable association with the kinetochore. Component of the RZZ complex composed of KNTC1/ROD, ZW10 and ZWILCH.

It is found in the cytoplasm. Its subcellular location is the nucleus. It localises to the chromosome. The protein resides in the centromere. The protein localises to the kinetochore. It is found in the cytoskeleton. Its subcellular location is the spindle. In terms of biological role, essential component of the mitotic checkpoint, which prevents cells from prematurely exiting mitosis. Required for the assembly of the dynein-dynactin and MAD1-MAD2 complexes onto kinetochores. Its function related to the spindle assembly machinery is proposed to depend on its association in the mitotic RZZ complex. The chain is Kinetochore-associated protein 1 (Kntc1) from Mus musculus (Mouse).